We begin with the raw amino-acid sequence, 675 residues long: Metal-nicotianamine transporter YSL3 (675 aa).

Transmembrane regions (helical) follow at residues isoleucine 42–methionine 62, leucine 66–leucine 86, cysteine 114–leucine 134, glycine 159–valine 179, valine 219–phenylalanine 239, isoleucine 280–isoleucine 300, valine 325–phenylalanine 345, isoleucine 386–isoleucine 406, isoleucine 408–leucine 428, valine 450–valine 470, valine 504–phenylalanine 524, phenylalanine 556–alanine 576, phenylalanine 602–tryptophan 622, and alanine 630–leucine 650.

This sequence belongs to the YSL (TC 2.A.67.2) family. Expressed in leaves, anthers and pollen grains. Restricted to the vasculature.

The protein localises to the membrane. Functionally, may be involved in the lateral transport of nicotianamine-chelated metals in the vasculature. The polypeptide is Metal-nicotianamine transporter YSL3 (YSL3) (Arabidopsis thaliana (Mouse-ear cress)).